We begin with the raw amino-acid sequence, 346 residues long: Glycerol-3-phosphate dehydrogenase [NAD(P)+] (346 aa).

Serine 11, tryptophan 12, histidine 32, arginine 33, and lysine 106 together coordinate NADPH. Sn-glycerol 3-phosphate is bound by residues lysine 106, glycine 137, and serine 139. Alanine 141 contacts NADPH. Residues lysine 193, aspartate 246, serine 256, arginine 257, and asparagine 258 each coordinate sn-glycerol 3-phosphate. Lysine 193 functions as the Proton acceptor in the catalytic mechanism. Arginine 257 serves as a coordination point for NADPH. The NADPH site is built by valine 281 and glutamate 283.

The protein belongs to the NAD-dependent glycerol-3-phosphate dehydrogenase family.

The protein localises to the cytoplasm. It catalyses the reaction sn-glycerol 3-phosphate + NAD(+) = dihydroxyacetone phosphate + NADH + H(+). It carries out the reaction sn-glycerol 3-phosphate + NADP(+) = dihydroxyacetone phosphate + NADPH + H(+). The protein operates within membrane lipid metabolism; glycerophospholipid metabolism. In terms of biological role, catalyzes the reduction of the glycolytic intermediate dihydroxyacetone phosphate (DHAP) to sn-glycerol 3-phosphate (G3P), the key precursor for phospholipid synthesis. This Bacillus licheniformis (strain ATCC 14580 / DSM 13 / JCM 2505 / CCUG 7422 / NBRC 12200 / NCIMB 9375 / NCTC 10341 / NRRL NRS-1264 / Gibson 46) protein is Glycerol-3-phosphate dehydrogenase [NAD(P)+].